The primary structure comprises 263 residues: Undecaprenyl-diphosphatase 2 (263 aa).

Helical transmembrane passes span 17–37 (TEFLPVSSTGHMILTGHLIGF), 42–62 (AKVFEVVIQLGSILAVVVIFW), 83–103 (LHIIIGMIPAGVLGVLFHSAI), 106–126 (VLFGPGPVVISLVAGGILMIV), 142–162 (ITYKQAFTIGMFQCLALWPGF), 183–203 (AEYTFILAVPMMVAASGLDLI), 216–236 (LFATGFITAFVVAMLAIVSFL), and 242–262 (VKLTPFAYYRFILAAVFYFFI).

Belongs to the UppP family.

Its subcellular location is the cell membrane. It catalyses the reaction di-trans,octa-cis-undecaprenyl diphosphate + H2O = di-trans,octa-cis-undecaprenyl phosphate + phosphate + H(+). In terms of biological role, catalyzes the dephosphorylation of undecaprenyl diphosphate (UPP). Confers resistance to bacitracin. The chain is Undecaprenyl-diphosphatase 2 from Bacillus anthracis.